The sequence spans 299 residues: Tetrahydromethanopterin S-methyltransferase subunit E (299 aa).

6 helical membrane-spanning segments follow: residues 57-79 (AISGEPVSYGLYVAVAGTIAWAL), 89-111 (AIIVGAGVAAIVHGAYSVSAFLG), 132-154 (HIGPIVGHGFIAVFTMTLAAYLA), 164-183 (LPLVSLIFGITVGAIGSSTG), 227-246 (FCSRFGGPLTGLCFGLIIFL), and 261-283 (LVTKTSIALLVGLLVVAVAAVIN).

The protein belongs to the MtrE family. As to quaternary structure, the complex is composed of 8 subunits; MtrA, MtrB, MtrC, MtrD, MtrE, MtrF, MtrG and MtrH.

It is found in the cell membrane. It carries out the reaction 5-methyl-5,6,7,8-tetrahydromethanopterin + coenzyme M + 2 Na(+)(in) = 5,6,7,8-tetrahydromethanopterin + methyl-coenzyme M + 2 Na(+)(out). It functions in the pathway one-carbon metabolism; methanogenesis from CO(2); methyl-coenzyme M from 5,10-methylene-5,6,7,8-tetrahydromethanopterin: step 2/2. Its function is as follows. Part of a complex that catalyzes the formation of methyl-coenzyme M and tetrahydromethanopterin from coenzyme M and methyl-tetrahydromethanopterin. This is an energy-conserving, sodium-ion translocating step. The chain is Tetrahydromethanopterin S-methyltransferase subunit E from Methanococcus maripaludis (strain DSM 14266 / JCM 13030 / NBRC 101832 / S2 / LL).